The primary structure comprises 163 residues: Phosphopantetheine adenylyltransferase (163 aa).

Ser-9 is a substrate binding site. Residues 9-10 and His-17 each bind ATP; that span reads SF. Substrate contacts are provided by Lys-41, Ile-75, and Arg-89. ATP-binding positions include 90-92, Glu-100, and 125-131; these read GIR and HLYVRSD.

The protein belongs to the bacterial CoaD family. As to quaternary structure, homohexamer. It depends on Mg(2+) as a cofactor.

The protein localises to the cytoplasm. It catalyses the reaction (R)-4'-phosphopantetheine + ATP + H(+) = 3'-dephospho-CoA + diphosphate. Its pathway is cofactor biosynthesis; coenzyme A biosynthesis; CoA from (R)-pantothenate: step 4/5. In terms of biological role, reversibly transfers an adenylyl group from ATP to 4'-phosphopantetheine, yielding dephospho-CoA (dPCoA) and pyrophosphate. This Borreliella burgdorferi (strain ZS7) (Borrelia burgdorferi) protein is Phosphopantetheine adenylyltransferase.